A 534-amino-acid polypeptide reads, in one-letter code: CTP synthase (534 aa).

An amidoligase domain region spans residues 1–267 (MTKYIFVTGG…DQIVCDHLKL (267 aa)). Residue serine 13 coordinates CTP. Serine 13 contributes to the UTP binding site. Residue 14–19 (SIGKGI) participates in ATP binding. Tyrosine 54 is an L-glutamine binding site. Aspartate 71 contributes to the ATP binding site. Residues aspartate 71 and glutamate 141 each contribute to the Mg(2+) site. Residues 148 to 150 (DIE), 188 to 193 (KTKPTQ), and lysine 224 contribute to the CTP site. UTP contacts are provided by residues 188 to 193 (KTKPTQ) and lysine 224. 240–242 (RDV) contributes to the ATP binding site. In terms of domain architecture, Glutamine amidotransferase type-1 spans 292 to 534 (KIALVGKYVE…FVTAAIKNSN (243 aa)). Glycine 354 contacts L-glutamine. Cysteine 381 functions as the Nucleophile; for glutamine hydrolysis in the catalytic mechanism. L-glutamine-binding positions include 382 to 385 (LGMQ), glutamate 405, and arginine 463. Active-site residues include histidine 508 and glutamate 510.

The protein belongs to the CTP synthase family. As to quaternary structure, homotetramer.

The enzyme catalyses UTP + L-glutamine + ATP + H2O = CTP + L-glutamate + ADP + phosphate + 2 H(+). The catalysed reaction is L-glutamine + H2O = L-glutamate + NH4(+). It catalyses the reaction UTP + NH4(+) + ATP = CTP + ADP + phosphate + 2 H(+). The protein operates within pyrimidine metabolism; CTP biosynthesis via de novo pathway; CTP from UDP: step 2/2. With respect to regulation, allosterically activated by GTP, when glutamine is the substrate; GTP has no effect on the reaction when ammonia is the substrate. The allosteric effector GTP functions by stabilizing the protein conformation that binds the tetrahedral intermediate(s) formed during glutamine hydrolysis. Inhibited by the product CTP, via allosteric rather than competitive inhibition. Functionally, catalyzes the ATP-dependent amination of UTP to CTP with either L-glutamine or ammonia as the source of nitrogen. Regulates intracellular CTP levels through interactions with the four ribonucleotide triphosphates. This Streptococcus pyogenes serotype M18 (strain MGAS8232) protein is CTP synthase.